Here is a 96-residue protein sequence, read N- to C-terminus: MYINFTSFLIKEKKYNVRFLLSRNRKIYAAVGEGHLSGFVTKNHKISRLSFIFSKKKKVFFTIFDTIITIIVRSGIPFPLLCSFGRNKIYILFNVL.

Residue asparagine 4 is glycosylated (N-linked (GlcNAc...) asparagine). The chain crosses the membrane as a helical span at residues 59-81 (VFFTIFDTIITIIVRSGIPFPLL).

The protein resides in the membrane. This is an uncharacterized protein from Saccharomyces cerevisiae (strain ATCC 204508 / S288c) (Baker's yeast).